The following is a 760-amino-acid chain: Xaa-Pro dipeptidyl-peptidase (760 aa).

Catalysis depends on charge relay system residues Ser-349, Asp-469, and His-499.

This sequence belongs to the peptidase S15 family. As to quaternary structure, homodimer.

The protein localises to the cytoplasm. It catalyses the reaction Hydrolyzes Xaa-Pro-|- bonds to release unblocked, N-terminal dipeptides from substrates including Ala-Pro-|-p-nitroanilide and (sequentially) Tyr-Pro-|-Phe-Pro-|-Gly-Pro-|-Ile.. Its function is as follows. Removes N-terminal dipeptides sequentially from polypeptides having unsubstituted N-termini provided that the penultimate residue is proline. In Streptococcus pyogenes serotype M18 (strain MGAS8232), this protein is Xaa-Pro dipeptidyl-peptidase.